We begin with the raw amino-acid sequence, 330 residues long: MRKCARIIYNPTSGKELFKRTLPDVLIKLERAGYETSAYATEREGDATLEAERALKRDYDIIIAAGGDGTLNEVVNGIAEQPNRPKLGIIPMGTVNDFGRALHLPSDIMGAVDVIIDDHTTKVDIGKMNNRYFINLAAGGQLTQVSYETPSRLKSIVGPFAYYIKGFEMLPQMKAVDLRIEYDNQVFQGEALLFLLGLTNSMAGFEKLVPDAKLDDGHFTLIIVEKANLAELGHIMTLASRGEHIKHPKVIYEKAKSINISSFTEMQLNVDGEYGGKLPANFLNLKRHIEVCTPKDIYNEELTEDQQVEDGIIEEKPSNEEIIKNNEISE.

The DAGKc domain occupies 1–132; the sequence is MRKCARIIYN…VDIGKMNNRY (132 aa). ATP contacts are provided by residues 10-14, T41, 67-73, and T94; these read NPTSG and GDGTLNE. K213, D216, and H218 together coordinate Mg(2+). The Proton acceptor role is filled by E273.

This sequence belongs to the diacylglycerol/lipid kinase family. Homodimer. The cofactor is Mg(2+).

It carries out the reaction a 1,2-diacyl-sn-glycerol + ATP = a 1,2-diacyl-sn-glycero-3-phosphate + ADP + H(+). In terms of biological role, catalyzes the phosphorylation of diacylglycerol (DAG) into phosphatidic acid. Is a key enzyme involved in the production of lipoteichoic acid by reintroducing DAG formed from the breakdown of membrane phospholipids into the phosphatidylglycerol biosynthetic pathway. The sequence is that of Diacylglycerol kinase (dagK) from Staphylococcus haemolyticus (strain JCSC1435).